The primary structure comprises 763 residues: Nibrin (763 aa).

Residues 22–81 enclose the FHA domain; that stretch reads YVVGRKNCAILIPEDQSISRCHATLSVSHPSANLGQTNAASVLSIKDSSKYGTTVNGDKM. 2 consecutive BRCT domains span residues 102–179 and 215–324; these read SKYR…CELL and KRKS…NPRR. Disordered stretches follow at residues 389–496, 535–593, and 738–763; these read VKET…SSQT, SKAA…SEIE, and QTQQ…KRRR. The span at 423–433 shows a compositional bias: basic and acidic residues; it reads LFREDETDTRK. Residues 434 to 443 are compositionally biased toward polar residues; the sequence is NTPSLLPTKS. The short motif at 469–474 is the Nuclear localization signal element; it reads AKKRDR. Residues 473 to 482 are compositionally biased toward basic and acidic residues; sequence DRAEDEKEAS. Residues 742 to 752 show a composition bias toward basic and acidic residues; that stretch reads VREESLAEDLF. The FxF/Y motif signature appears at 748–757; sequence AEDLFRYNPK.

It belongs to the Nibrin family. As to quaternary structure, component of the MRN complex composed of two heterodimers rad50 and mre11 associated with a single nbn.

Its subcellular location is the nucleus. The protein localises to the chromosome. The protein resides in the PML body. It is found in the telomere. Functionally, component of the MRN complex, which plays a central role in double-strand break (DSB) repair, DNA recombination, maintenance of telomere integrity and meiosis. The MRN complex is involved in the repair of DNA double-strand breaks (DSBs) via homologous recombination (HR), an error-free mechanism which primarily occurs during S and G2 phases. The complex (1) mediates the end resection of damaged DNA, which generates proper single-stranded DNA, a key initial steps in HR, and is (2) required for the recruitment of other repair factors and efficient activation of ATM and ATR upon DNA damage. The MRN complex possesses single-strand endonuclease activity and double-strand-specific 3'-5' exonuclease activity, which are provided by MRE11, to initiate end resection, which is required for single-strand invasion and recombination. Within the MRN complex, nbn acts as a protein-protein adapter, which specifically recognizes and binds phosphorylated proteins, promoting their recruitment to DNA damage sites. Recruits mre11 and rad50 components of the MRN complex to DSBs in response to DNA damage. Promotes the recruitment of PI3/PI4-kinase family members atm, atr, and probably DNA-PKcs to the DNA damage sites, activating their functions. Mediates the recruitment of phosphorylated rbbp8/CtIP to DSBs, leading to cooperation between the MRN complex and rbbp8/CtIP to initiate end resection. The MRN complex promotes recruitment of topbp1 to DNA damage sites. The MRN complex and rbbp8/CtIP are also required for chromosome alignment during metaphase. The chain is Nibrin from Xenopus laevis (African clawed frog).